Here is a 306-residue protein sequence, read N- to C-terminus: Elongation factor Ts (306 aa).

The segment at 80–83 (TDFV) is involved in Mg(2+) ion dislocation from EF-Tu.

Belongs to the EF-Ts family.

The protein resides in the cytoplasm. Associates with the EF-Tu.GDP complex and induces the exchange of GDP to GTP. It remains bound to the aminoacyl-tRNA.EF-Tu.GTP complex up to the GTP hydrolysis stage on the ribosome. The polypeptide is Elongation factor Ts (Methylorubrum extorquens (strain CM4 / NCIMB 13688) (Methylobacterium extorquens)).